We begin with the raw amino-acid sequence, 496 residues long: Fibronectin type III and SPRY domain-containing protein 1 (496 aa).

The stretch at Gln4–Glu99 forms a coiled coil. Residues Leu105 to Leu162 form the COS domain. The 105-residue stretch at Val164–Phe268 folds into the Fibronectin type-III domain. The B30.2/SPRY domain maps to Trp290 to Ala477. Positions Lys301–Asp336 are disordered. Residues Arg310 and Arg320 each carry the omega-N-methylarginine modification.

In terms of assembly, oligomerization is required for binding to microtubules.

Its subcellular location is the cytoplasm. The protein resides in the cytoskeleton. It localises to the microtubule organizing center. The protein localises to the centrosome. It is found in the nucleus. Its subcellular location is the cleavage furrow. In terms of biological role, may be involved in microtubule organization and stabilization. This Mus musculus (Mouse) protein is Fibronectin type III and SPRY domain-containing protein 1 (Fsd1).